We begin with the raw amino-acid sequence, 425 residues long: Inhibin beta A chain (425 aa).

A signal peptide spans 1–20; that stretch reads MPLLWLRGFLLASCWIIVRS. Residues 21–309 constitute a propeptide that is removed on maturation; that stretch reads SPTPGSEGHS…EDHPHRRRRR (289 aa). N165 is a glycosylation site (N-linked (GlcNAc...) asparagine). The tract at residues 259 to 289 is disordered; that stretch reads KKKKKEEEGEGKKRDGEGGAGGDEEKEQSHR. A compositionally biased stretch (basic and acidic residues) spans 263-275; that stretch reads KEEEGEGKKRDGE. Cystine bridges form between C313-C321, C320-C390, C349-C422, and C353-C424.

The protein belongs to the TGF-beta family. Dimeric, linked by one or more disulfide bonds. Inhibin A is a dimer of alpha/INHA and beta-A/INHBA. Activin A is a homodimer of beta-A/INHBA. Activin AB is a dimer of beta-A/INHBA and beta-B/INHBB. Interacts with FST and FSTL3; these interactions prevent activin A interaction to its type II receptor. Activin A interacts with ACVR2A. Activin A interacts with BMPR2. Inhibin A interacts with ACVR1; this interaction creates a non-signaling complex (NSC) that inhibits ACVR1-mediated BMP signaling. Inhibin A interacts with ACVR2A.

It localises to the secreted. Inhibins/activins are involved in regulating a number of diverse functions such as hypothalamic and pituitary hormone secretion, gonadal hormone secretion, germ cell development and maturation, erythroid differentiation, insulin secretion, nerve cell survival, embryonic axial development or bone growth, depending on their subunit composition. Functionally, activin A is a homodimer of INHBA that plays a role in several essential biological processes including embryonic development, stem cell maintenance and differentiation, haematopoiesis, cell proliferation and tissue fibrosis. Signals through type I (such as ACVR1B or ACVR1C) and type II receptors (such as ACVR2A, ACVR2B or BMPR2) which, upon ligand binding, phosphorylate SMAD2 and SMAD3 intracellular signaling mediators that form a complex with SMAD4, translocate to the nucleus and modulate gene expression. Can also activate alternative non-canonical intracellular signaling pathways including the p38 MAPK, extracellular signal-regulated kinases 1/2 (ERK1/2) and c-Jun N-terminal kinases (JNKs) to modulate cell migration and differentiation. Alternatively, promotes osteoblastic differentiation via ACVRL1-SMAD1/5/9 pathway. In addition, can engage the type I receptor ACVR1 to form an ACVR1-activin A-type II receptor non-signaling complex (NSC) that renders receptors unavailable for engagement with BMPs, hence resulting in an apparent inhibition of ACVR1-mediated BMP signaling. Its function is as follows. Inhibin A is a dimer of alpha/INHA and beta-A/INHBA that functions as a feedback regulator in the hypothalamic-pituitary-gonadal (HPG) axis. Inhibits the secretion of FSH from the anterior pituitary gland by acting on pituitary gonadotrope cells. Antagonizes activin A by binding to the proteoglycan, betaglycan, and forming a stable complex with and, thereby, sequestering type II activin receptors while excluding type I receptor. This chain is Inhibin beta A chain (INHBA), found in Bos taurus (Bovine).